The chain runs to 1119 residues: Leucine-rich repeats and immunoglobulin-like domains protein 3 (1119 aa).

The first 24 residues, 1 to 24 (MSAPSLRARAAGLGLLLCAVLGRA), serve as a signal peptide directing secretion. Positions 38–74 (PSGVAAERPCPTTCRCLGDLLDCSRKRLARLPEPLPS) constitute an LRRNT domain. LRR repeat units follow at residues 75-96 (WVARLDLSHNRLSFIKASSMSH), 99-120 (SLREVKLNNNELETIPNLGPVS), 122-142 (NITLLSLAGNRIVEILPEHLK), 146-167 (SLETLDLSSNNISELQTAFPAL), 168-189 (QLKYLYLNSNRVTSMEPGYFDN), 193-214 (TLLVLKLNRNRISAIPPKMFKL), 216-237 (QLQHLELNRNKIKNVDGLTFQG), 240-261 (ALKSLKMQRNGVTKLMDGAFWG), 264-285 (NMEILQLDHNNLTEITKGWLYG), 288-309 (MLQELHLSQNAINRISPDAWEF), 312-333 (KLSELDLTFNHLSRLDDSSFLG), 336-357 (LLNTLHIGNNRVSYIADCAFRG), 360-382 (SLKTLDLKNNEISWTIEDMNGAF), 387-408 (KLRRLILQGNRIRSITKKAFTG), and 411-432 (ALEHLDLSDNAIMSLQGNAFSQ). Residues N122 and N156 are each glycosylated (N-linked (GlcNAc...) asparagine). A glycan (N-linked (GlcNAc...) asparagine) is linked at N274. N-linked (GlcNAc...) asparagine glycosylation is found at N442, N469, and N515. The region spanning 444–495 (SSLLCDCQLKWLPQWVAENNFQSFVNASCAHPQLLKGRSIFAVSPDGFVCDD) is the LRRCT domain. 3 consecutive Ig-like C2-type domains span residues 499 to 598 (PQIT…AKLT), 603 to 692 (PSFT…ATLT), and 697 to 783 (PSFL…VRLS). 2 disulfide bridges follow: C520–C581 and C624–C676. 2 N-linked (GlcNAc...) asparagine glycosylation sites follow: N688 and N729. C718 and C767 are disulfide-bonded. A helical membrane pass occupies residues 810 to 830 (VVIIAVVCCVVGTSLVWVVII). N-linked (GlcNAc...) asparagine glycosylation is found at N905, N987, N999, and N1016. The segment at 1073-1093 (SSPDLDSGSEEDGKERTDFQE) is disordered. The span at 1083–1093 (EDGKERTDFQE) shows a compositional bias: basic and acidic residues.

Interacts with EGFR, ERBB2 and ERBB4 (in vitro). As to expression, widely expressed.

The protein localises to the cell membrane. It is found in the cytoplasmic vesicle membrane. May play a role in craniofacial and inner ear morphogenesis during embryonic development. May act within the otic vesicle epithelium to control formation of the lateral semicircular canal in the inner ear, possibly by restricting the expression of NTN1. This is Leucine-rich repeats and immunoglobulin-like domains protein 3 (LRIG3) from Homo sapiens (Human).